Here is a 286-residue protein sequence, read N- to C-terminus: ATP synthase gamma chain (286 aa).

Belongs to the ATPase gamma chain family. F-type ATPases have 2 components, CF(1) - the catalytic core - and CF(0) - the membrane proton channel. CF(1) has five subunits: alpha(3), beta(3), gamma(1), delta(1), epsilon(1). CF(0) has three main subunits: a, b and c.

The protein localises to the cell inner membrane. Its function is as follows. Produces ATP from ADP in the presence of a proton gradient across the membrane. The gamma chain is believed to be important in regulating ATPase activity and the flow of protons through the CF(0) complex. This Pseudomonas fluorescens (strain ATCC BAA-477 / NRRL B-23932 / Pf-5) protein is ATP synthase gamma chain.